Reading from the N-terminus, the 240-residue chain is 7-cyano-7-deazaguanine synthase (240 aa).

18–28 (FSGGQDSTTCL) is an ATP binding site. Cysteine 197, cysteine 206, cysteine 209, and cysteine 212 together coordinate Zn(2+).

The protein belongs to the QueC family. Zn(2+) is required as a cofactor.

The catalysed reaction is 7-carboxy-7-deazaguanine + NH4(+) + ATP = 7-cyano-7-deazaguanine + ADP + phosphate + H2O + H(+). The protein operates within purine metabolism; 7-cyano-7-deazaguanine biosynthesis. Functionally, catalyzes the ATP-dependent conversion of 7-carboxy-7-deazaguanine (CDG) to 7-cyano-7-deazaguanine (preQ(0)). This chain is 7-cyano-7-deazaguanine synthase, found in Shewanella baltica (strain OS223).